The sequence spans 166 residues: Regulatory protein RecX (166 aa).

It belongs to the RecX family.

It is found in the cytoplasm. Modulates RecA activity. The polypeptide is Regulatory protein RecX (Escherichia coli (strain SMS-3-5 / SECEC)).